The chain runs to 427 residues: Serine--tRNA ligase (427 aa).

An L-serine-binding site is contributed by 228 to 230; sequence TSE. 259–261 contacts ATP; the sequence is RSE. Residue Glu282 participates in L-serine binding. 346 to 349 contacts ATP; it reads EISS. An L-serine-binding site is contributed by Ser384.

It belongs to the class-II aminoacyl-tRNA synthetase family. Type-1 seryl-tRNA synthetase subfamily. Homodimer. The tRNA molecule binds across the dimer.

Its subcellular location is the cytoplasm. The enzyme catalyses tRNA(Ser) + L-serine + ATP = L-seryl-tRNA(Ser) + AMP + diphosphate + H(+). The catalysed reaction is tRNA(Sec) + L-serine + ATP = L-seryl-tRNA(Sec) + AMP + diphosphate + H(+). Its pathway is aminoacyl-tRNA biosynthesis; selenocysteinyl-tRNA(Sec) biosynthesis; L-seryl-tRNA(Sec) from L-serine and tRNA(Sec): step 1/1. Functionally, catalyzes the attachment of serine to tRNA(Ser). Is also able to aminoacylate tRNA(Sec) with serine, to form the misacylated tRNA L-seryl-tRNA(Sec), which will be further converted into selenocysteinyl-tRNA(Sec). This Ehrlichia ruminantium (strain Welgevonden) protein is Serine--tRNA ligase.